A 2145-amino-acid polypeptide reads, in one-letter code: Adenylate cyclase (2145 aa).

Disordered stretches follow at residues 1–115 (MPRN…RMSD), 127–236 (DPAG…SGAR), 266–307 (GKEH…PVPK), and 329–547 (VRDI…GPTD). Low complexity-rich tracts occupy residues 7–23 (SSRF…SARS), 35–68 (PSAS…APSR), and 89–107 (SPTS…SSNS). Polar residues-rich tracts occupy residues 134–148 (SRTQ…SLSQ) and 159–205 (PASS…TESP). Over residues 217–234 (SIASITTTASSQGSRASG) the composition is skewed to low complexity. A compositionally biased stretch (basic residues) spans 269-281 (HRSHSYSHARPHR). The span at 343–357 (NDSSQQNNPPKTSGS) shows a compositional bias: polar residues. The span at 377 to 403 (KSNEDPRSLRPTVSREDSTISVPKDRN) shows a compositional bias: basic and acidic residues. Residues 404–441 (GSSTMYGTRSRAQSPAPSTTGSYWGHKSGSTDGQTSPG) are compositionally biased toward polar residues. Composition is skewed to basic and acidic residues over residues 454–466 (RLKE…DLKK) and 495–511 (ADGK…RPDL). In terms of domain architecture, Ras-associating spans 637 to 727 (HNYCIRVFRA…IEDIGREDNS (91 aa)). 15 LRR repeats span residues 779-800 (EIIS…FISV), 803-824 (NLRD…FGYA), 826-847 (RLTM…ALHN), 850-871 (GLLK…FEAF), 873-894 (VLRT…LAKL), 896-917 (NLVD…VGQM), 919-941 (SLER…FKNL), 943-964 (SLRE…SQLP), 965-986 (KLEI…FERV), 987-1006 (RSIK…APVP), 1007-1028 (TLKA…FHNM), 1030-1051 (NLER…IGNL), 1053-1074 (RLEY…IGCL), 1076-1097 (ELKR…LWWA), and 1099-1120 (KLDY…ASRA). The tract at residues 1114 to 1226 (PKPASRAPHP…SSRKDSSHTQ (113 aa)) is disordered. 2 stretches are compositionally biased toward low complexity: residues 1160 to 1179 (RPSQ…VPGG) and 1201 to 1217 (SRST…PTAS). 6 LRR repeats span residues 1235–1255 (SLRY…DQLC), 1259–1280 (NLRV…SIKS), 1283–1304 (QLVE…DLEE), 1307–1328 (MLQT…ISRA), 1330–1352 (KLTV…PYDW), and 1359–1380 (NLRY…SVPT). One can recognise a PPM-type phosphatase domain in the interval 1432 to 1709 (PYGMADTLGS…NKMTVQMLGV (278 aa)). The interval 1718-1760 (RSRQHKGQSMPVYASLQDDGGSSTGMRRARKARDGPLDSTLGR) is disordered. Residues 1773–1910 (AIVFTDIKNS…PMVNKASRIS (138 aa)) enclose the Guanylate cyclase domain. 2 residues coordinate Mg(2+): Asp1778 and Asp1821.

Belongs to the adenylyl cyclase class-3 family. It depends on Mg(2+) as a cofactor.

It carries out the reaction ATP = 3',5'-cyclic AMP + diphosphate. Plays essential roles in regulation of cellular metabolism by catalyzing the synthesis of a second messenger, cAMP. The protein is Adenylate cyclase of Podospora anserina (Pleurage anserina).